A 681-amino-acid chain; its full sequence is UvrABC system protein C (681 aa).

Residues 16–95 form the GIY-YIG domain; it reads DSPGVYKFRD…IKEYDPRFNV (80 aa). The UVR domain maps to 208–243; sequence GTYIRRLERQMTDAAEEMEYEKAARLRDDIGALKKA. A disordered region spans residues 650 to 681; it reads EIMEDEEPGTTAGSSQEPVSAGTSDERRGQET. Residues 660 to 672 are compositionally biased toward polar residues; the sequence is TAGSSQEPVSAGT.

Belongs to the UvrC family. Interacts with UvrB in an incision complex.

The protein localises to the cytoplasm. The UvrABC repair system catalyzes the recognition and processing of DNA lesions. UvrC both incises the 5' and 3' sides of the lesion. The N-terminal half is responsible for the 3' incision and the C-terminal half is responsible for the 5' incision. This is UvrABC system protein C from Streptomyces avermitilis (strain ATCC 31267 / DSM 46492 / JCM 5070 / NBRC 14893 / NCIMB 12804 / NRRL 8165 / MA-4680).